A 226-amino-acid chain; its full sequence is Leucyl/phenylalanyl-tRNA--protein transferase (226 aa).

Belongs to the L/F-transferase family.

It localises to the cytoplasm. The enzyme catalyses N-terminal L-lysyl-[protein] + L-leucyl-tRNA(Leu) = N-terminal L-leucyl-L-lysyl-[protein] + tRNA(Leu) + H(+). The catalysed reaction is N-terminal L-arginyl-[protein] + L-leucyl-tRNA(Leu) = N-terminal L-leucyl-L-arginyl-[protein] + tRNA(Leu) + H(+). It catalyses the reaction L-phenylalanyl-tRNA(Phe) + an N-terminal L-alpha-aminoacyl-[protein] = an N-terminal L-phenylalanyl-L-alpha-aminoacyl-[protein] + tRNA(Phe). Functions in the N-end rule pathway of protein degradation where it conjugates Leu, Phe and, less efficiently, Met from aminoacyl-tRNAs to the N-termini of proteins containing an N-terminal arginine or lysine. The sequence is that of Leucyl/phenylalanyl-tRNA--protein transferase from Pseudomonas aeruginosa (strain LESB58).